The sequence spans 203 residues: NADH dehydrogenase [ubiquinone] 1 alpha subcomplex assembly factor 4 (203 aa).

The protein belongs to the NDUFAF4 family. Together with NdufAF3 associates with mitochondrial complex I assembly intermediates during its biogenesis.

Involved in the assembly of mitochondrial NADH:ubiquinone oxidoreductase complex (complex I). Together with NdufAF3, involved in biogenesis of complex 1 modules N, Q and P-peripheral, but not the P-distal module. Required for recruitment of the complex I assembly factor Timmdc1 to complex 1 assembly intermediates. The protein is NADH dehydrogenase [ubiquinone] 1 alpha subcomplex assembly factor 4 of Drosophila melanogaster (Fruit fly).